Reading from the N-terminus, the 440-residue chain is tRNA-2-methylthio-N(6)-dimethylallyladenosine synthase (440 aa).

The 117-residue stretch at 5–121 (KLLYLETFGC…LPELVRAAEK (117 aa)) folds into the MTTase N-terminal domain. Positions 14, 50, 84, 159, 163, and 166 each coordinate [4Fe-4S] cluster. In terms of domain architecture, Radical SAM core spans 145–375 (RTDGVSRFVT…LDLQRRITLE (231 aa)). In terms of domain architecture, TRAM spans 378–440 (KSFVGTVQQV…QNSLQGELCR (63 aa)).

This sequence belongs to the methylthiotransferase family. MiaB subfamily. Monomer. It depends on [4Fe-4S] cluster as a cofactor.

It localises to the cytoplasm. It catalyses the reaction N(6)-dimethylallyladenosine(37) in tRNA + (sulfur carrier)-SH + AH2 + 2 S-adenosyl-L-methionine = 2-methylsulfanyl-N(6)-dimethylallyladenosine(37) in tRNA + (sulfur carrier)-H + 5'-deoxyadenosine + L-methionine + A + S-adenosyl-L-homocysteine + 2 H(+). Its function is as follows. Catalyzes the methylthiolation of N6-(dimethylallyl)adenosine (i(6)A), leading to the formation of 2-methylthio-N6-(dimethylallyl)adenosine (ms(2)i(6)A) at position 37 in tRNAs that read codons beginning with uridine. This is tRNA-2-methylthio-N(6)-dimethylallyladenosine synthase from Geotalea uraniireducens (strain Rf4) (Geobacter uraniireducens).